The sequence spans 343 residues: Ubiquitin thioesterase OTU1 (343 aa).

Positions 45–123 are UBX-like; sequence RCKAKGGTHL…IVEEDQTRPK (79 aa). The region spanning 144–269 is the OTU domain; it reads LTRTAVPADN…GIHYDPLQRN (126 aa). The segment at 149–155 is cys-loop; that stretch reads VPADNSC. The active site involves Asp152. The Nucleophile role is filled by Cys155. The segment at 208 to 218 is variable-loop; the sequence is IRRDDTWGGAI. The segment at 258–262 is his-loop; that stretch reads YDGIH. Ile261 contributes to the substrate binding site. Residue His262 is part of the active site. The interval 286–291 is S2 site; it reads DIVLVQ. The C2H2-type zinc finger occupies 313–337; it reads LRCMICQKGLTGQAEARDHARETGH. Residue His337 is part of the active site.

In terms of assembly, interacts with VCP; the interaction is direct. Interacts with FAF2/UBXD8. Interacts with DERL1; however interaction is dependent on the UBAX-like region, suggesting that it may be indirect. Interacts with PLAA, UBXN6 and VCP; may form a complex involved in macroautophagy.

The protein resides in the cytoplasm. The enzyme catalyses Thiol-dependent hydrolysis of ester, thioester, amide, peptide and isopeptide bonds formed by the C-terminal Gly of ubiquitin (a 76-residue protein attached to proteins as an intracellular targeting signal).. In terms of biological role, hydrolase that can remove conjugated ubiquitin from proteins and participates in endoplasmic reticulum-associated degradation (ERAD) for misfolded lumenal proteins. May act by triming the ubiquitin chain on the associated substrate to facilitate their threading through the VCP/p97 pore. Ubiquitin moieties on substrates may present a steric impediment to the threading process when the substrate is transferred to the VCP pore and threaded through VCP's axial channel. Mediates deubiquitination of 'Lys-27'-, 'Lys-29'- and 'Lys-33'-linked polyubiquitin chains. Also able to hydrolyze 'Lys-11'-linked ubiquitin chains. Cleaves both polyubiquitin and di-ubiquitin. May play a role in macroautophagy, regulating for instance the clearance of damaged lysosomes. May recruit PLAA, UBXN6 and VCP to damaged lysosome membranes decorated with K48-linked ubiquitin chains and remove these chains allowing autophagosome formation. The sequence is that of Ubiquitin thioesterase OTU1 (Yod1) from Mus musculus (Mouse).